A 984-amino-acid chain; its full sequence is Probable serine/threonine-protein kinase ireA (984 aa).

An N-terminal signal peptide occupies residues 1–26 (MTFSKTRNKIIFLLFLIIINIFNINA). Residues 27 to 436 (YIKDENEDDL…NDLLDSNKLK (410 aa)) are Extracellular-facing. Disordered stretches follow at residues 70–91 (YSTS…EITK) and 137–157 (EDKS…DENK). Composition is skewed to low complexity over residues 82–91 (STSTSTEITK) and 141–150 (STSSTSTTSE). The N-linked (GlcNAc...) asparagine glycan is linked to N228. The tract at residues 352–427 (SPPSNNNNNN…GANNNNNNNN (76 aa)) is disordered. Residues 356–397 (NNNNNNNNNNNNNNNNNNNNNNNNNNNNNNNNNNKNNNNNNK) are compositionally biased toward low complexity. N-linked (GlcNAc...) asparagine glycosylation is present at N398. Residues 437–457 (NYDIYLYSSIVILITSIIVFI) traverse the membrane as a helical segment. Residues 458–984 (RSKKNFNLIN…NDQYFVQYYY (527 aa)) lie on the Cytoplasmic side of the membrane. The stretch at 467 to 533 (NVNNNNNQNN…NDLIDEFIST (67 aa)) forms a coiled coil. Positions 472-489 (NNQNNNQNSNQNNNINNK) are enriched in low complexity. Residues 472–518 (NNQNNNQNSNQNNNINNKKTPKKKKKKQKNKNNKNNNDEDDENEIEN) are disordered. A compositionally biased stretch (basic residues) spans 490 to 503 (KTPKKKKKKQKNKN). The span at 509–518 (DEDDENEIEN) shows a compositional bias: acidic residues. Positions 575–851 (IITNKILGTG…IGECINHPFF (277 aa)) constitute a Protein kinase domain. Residues 581–589 (LGTGSCGTI) and K603 contribute to the ATP site. Residues 667–676 (PTDSPSIQSS) show a composition bias toward polar residues. Residues 667-692 (PTDSPSIQSSNNNGNGNNGNNNNNNQ) form a disordered region. Positions 677 to 691 (NNNGNGNNGNNNNNN) are enriched in low complexity. The Proton acceptor role is filled by D722. Residues 854–984 (VHKKLSFLVA…NDQYFVQYYY (131 aa)) enclose the KEN domain.

Belongs to the protein kinase superfamily. Ser/Thr protein kinase family.

It localises to the membrane. It carries out the reaction L-seryl-[protein] + ATP = O-phospho-L-seryl-[protein] + ADP + H(+). The enzyme catalyses L-threonyl-[protein] + ATP = O-phospho-L-threonyl-[protein] + ADP + H(+). The polypeptide is Probable serine/threonine-protein kinase ireA (ireA) (Dictyostelium discoideum (Social amoeba)).